The primary structure comprises 167 residues: Small ribosomal subunit protein mS25 (167 aa).

This sequence belongs to the mitochondrion-specific ribosomal protein mS25 family. Component of the mitochondrial ribosome small subunit (28S) which comprises a 12S rRNA and about 30 distinct proteins.

The protein localises to the mitochondrion. The protein is Small ribosomal subunit protein mS25 (mRpS25) of Drosophila melanogaster (Fruit fly).